The primary structure comprises 256 residues: 3-isopropylmalate dehydratase small subunit 2 (256 aa).

A chloroplast-targeting transit peptide spans 1–59; it reads MAYSLPTFPQALPCSSTKTSSSLATFRSPFLRFNGSTSLIPSSISITSRGTSSPTIIPR.

The protein belongs to the LeuD family. In terms of assembly, heterodimer of the large LEUC/IIL1 subunit and the small LEUD (SSU1, SSU2 or SSU3) subunits. As to expression, expressed in vascular bundles of roots, cotyledons and rosette leaves. Expressed in stem vascular bundles which branche off into lateral inflorescences. Expressed in connective tissues in anthers. In young seedlings, expressed in cotyledon epidermal cells and vasculare bundles. In hypocotyls, expressed in parenchyma cells surrounding the vasculature and further peripheral cells. In seedling roots, expressed in cells along the vasculature. In roots of adult plants, expressed in cells closely associated with the stele. In flowering stalks, expressed in parenchyma cells associated with the phloem or the xylem. Expressed in the vasculature of sepals and petals.

The protein resides in the plastid. It localises to the chloroplast stroma. The enzyme catalyses (2R,3S)-3-isopropylmalate = (2S)-2-isopropylmalate. It carries out the reaction a 2-(omega-methylsulfanyl)alkylmalate = a 2-(omega-methylsulfanyl)alkylmaleate + H2O. It catalyses the reaction 2-(3-methylsulfanyl)propylmalate = 2-(2-methylsulfanyl)propylmaleate + H2O. The catalysed reaction is a 3-(omega-methylsulfanyl)alkylmalate = a 2-(omega-methylsulfanyl)alkylmaleate + H2O. The enzyme catalyses 2-(2-methylsulfanyl)ethylmalate = 2-(2-methylsulfanyl)ethylmaleate + H2O. It carries out the reaction 3-(2-methylsulfanyl)ethylmalate = 2-(2-methylsulfanyl)ethylmaleate + H2O. It catalyses the reaction 3-(3-methylsulfanyl)propylmalate = 2-(2-methylsulfanyl)propylmaleate + H2O. Its pathway is amino-acid biosynthesis; L-leucine biosynthesis; L-leucine from 3-methyl-2-oxobutanoate: step 2/4. In terms of biological role, catalyzes the isomerization between 2-isopropylmalate and 3-isopropylmalate, via the formation of 2-isopropylmaleate. Functions redundantly with LEUD2 in the methionine chain elongation pathway of aliphatic glucosinolate formation. The sequence is that of 3-isopropylmalate dehydratase small subunit 2 from Arabidopsis thaliana (Mouse-ear cress).